Here is a 319-residue protein sequence, read N- to C-terminus: 4-diphosphocytidyl-2-C-methyl-D-erythritol kinase (319 aa).

Lysine 18 is an active-site residue. 103 to 113 (PIGAGLAGGST) contributes to the ATP binding site. Aspartate 145 is an active-site residue.

Belongs to the GHMP kinase family. IspE subfamily.

It carries out the reaction 4-CDP-2-C-methyl-D-erythritol + ATP = 4-CDP-2-C-methyl-D-erythritol 2-phosphate + ADP + H(+). Its pathway is isoprenoid biosynthesis; isopentenyl diphosphate biosynthesis via DXP pathway; isopentenyl diphosphate from 1-deoxy-D-xylulose 5-phosphate: step 3/6. Functionally, catalyzes the phosphorylation of the position 2 hydroxy group of 4-diphosphocytidyl-2C-methyl-D-erythritol. The chain is 4-diphosphocytidyl-2-C-methyl-D-erythritol kinase from Prochlorococcus marinus (strain NATL2A).